Here is a 365-residue protein sequence, read N- to C-terminus: Galactoside alpha-(1,2)-fucosyltransferase 1 (365 aa).

The Cytoplasmic portion of the chain corresponds to 1 to 8; that stretch reads MWLRSHRQ. A helical; Signal-anchor for type II membrane protein membrane pass occupies residues 9–25; the sequence is LCLAFLLVCVLSVIFFL. The Lumenal segment spans residues 26-365; that stretch reads HIHQDSFPHG…LSPLWTLAKP (340 aa). N-linked (GlcNAc...) asparagine glycans are attached at residues N65 and N327.

It belongs to the glycosyltransferase 11 family.

Its subcellular location is the golgi apparatus. It is found in the golgi stack membrane. It catalyses the reaction a beta-D-galactosyl-(1-&gt;4)-N-acetyl-beta-D-glucosaminyl derivative + GDP-beta-L-fucose = an alpha-L-Fuc-(1-&gt;2)-beta-D-Gal-(1-&gt;4)-beta-D-GlcNAc derivative + GDP + H(+). The catalysed reaction is a ganglioside GA1 + GDP-beta-L-fucose = a ganglioside Fuc-GA1 + GDP + H(+). The enzyme catalyses a beta-D-Gal-(1-&gt;3)-beta-D-GlcNAc-(1-&gt;3)-beta-D-Gal-(1-&gt;4)-beta-D-Glc-(1&lt;-&gt;1')-Cer(d18:1(4E)) + GDP-beta-L-fucose = alpha-L-fucosyl-(1-&gt;2)- beta-D-galactosyl-(1-&gt;3)-N-acetyl-beta-D-glucosaminyl-(1-&gt;3)-beta-D-galactosyl-(1-&gt;4)-beta-D-glucosyl-(1&lt;-&gt;1')-N-acylsphing-4-enine + GDP + H(+). It carries out the reaction a neolactoside nLc4Cer(d18:1(4E)) + GDP-beta-L-fucose = a neolactoside IV(2)-alpha-Fuc-nLc4Cer(d18:1(4E)) + GDP + H(+). It catalyses the reaction a ganglioside GM1 + GDP-beta-L-fucose = a ganglioside Fuc-GM1 + GDP + H(+). The catalysed reaction is beta-D-galactosyl-(1-&gt;3)-N-acetyl-D-galactosamine + GDP-beta-L-fucose = alpha-L-fucosyl-(1-&gt;2)-beta-D-galactosyl-(1-&gt;3)-N-acetyl-D-galactosamine + GDP + H(+). It participates in protein modification; protein glycosylation. In terms of biological role, catalyzes the transfer of L-fucose, from a guanosine diphosphate-beta-L-fucose, to the terminal galactose residue of glycoconjugates through an alpha(1,2) linkage leading to H antigen synthesis that is an intermediate substrate in the synthesis of ABO blood group antigens. H antigen is essential for maturation of the glomerular layer of the main olfactory bulb, in cell migration and early cell-cell contacts during tumor associated angiogenesis. Preferentially fucosylates soluble lactose and to a lesser extent fucosylates glycolipids gangliosides GA1 and GM1a. This is Galactoside alpha-(1,2)-fucosyltransferase 1 from Homo sapiens (Human).